The chain runs to 1190 residues: Serine/threonine-protein kinase N (1190 aa).

3 REM-1 domains span residues 28-102 (NLPE…QILL), 142-219 (ALEG…NREQ), and 242-322 (SSQP…ELPA). The C2 domain occupies 359–515 (LGGKPYQSVS…MALQLEPQGL (157 aa)). Residues 395–404 (PGRSRRDKDN) show a composition bias toward basic and acidic residues. 4 disordered regions span residues 395-415 (PGRS…RSFV), 572-715 (HVHM…PPPP), 757-787 (PATP…QPPQ), and 811-832 (SPSS…RNVA). Composition is skewed to low complexity over residues 576–588 (GSAG…TGSS) and 767–787 (AAAG…QPPQ). Residues 863-1122 (FRLLSVLGRG…AEDVKKQAFF (260 aa)) enclose the Protein kinase domain. Residues 869–877 (LGRGHFGKV) and lysine 892 each bind ATP. The active-site Proton acceptor is the aspartate 988. Residues 1123–1190 (RSIVWDDLLL…QDFSYTAEWC (68 aa)) enclose the AGC-kinase C-terminal domain.

It belongs to the protein kinase superfamily. Ser/Thr protein kinase family. As to quaternary structure, interacts (via N-terminus) with Rho1 (via REM repeats), Rac1 (via REM 1 repeat) and Rac2. In terms of processing, phosphorylated. Autophosphorylated; autophosphorylation is stimulated by GTP-bound Rho/Rac GTPases.

Its subcellular location is the cytoplasm. The protein localises to the nucleus. It is found in the membrane. It localises to the cell projection. The protein resides in the lamellipodium. Its subcellular location is the cytoskeleton. The protein localises to the cleavage furrow. It is found in the midbody. It localises to the cell junction. It carries out the reaction L-seryl-[protein] + ATP = O-phospho-L-seryl-[protein] + ADP + H(+). The catalysed reaction is L-threonyl-[protein] + ATP = O-phospho-L-threonyl-[protein] + ADP + H(+). With respect to regulation, activated by lipids, particularly cardiolipin and to a lesser extent by other acidic phospholipids and unsaturated fatty acids. Two specific sites, Thr-1022 (activation loop of the kinase domain) and Thr-1164 (turn motif), may be needed to be phosphorylated for its full activation. Kinase activity is activated upon binding to GTP-bound Rho/Rac GTPases. Functionally, pkc-related serine/threonine-protein kinase and Rho/Rac effector protein that participates in specific signal transduction responses in the cell. May play a role in the regulation of cell cycle progression, actin cytoskeleton assembly, cell migration, cell adhesion and transcription activation signaling processes. Plays a role in regulating Rho-mediated dorsal closure during embryogenesis. This Drosophila melanogaster (Fruit fly) protein is Serine/threonine-protein kinase N (Pkn).